Here is a 382-residue protein sequence, read N- to C-terminus: Pyruvate dehydrogenase E1 component subunit beta, mitochondrial (382 aa).

Residues 1-46 constitute a mitochondrion transit peptide; it reads MSRFLRPAFRLATTATRASTIRPTPSSLITKAAAVPTTRLLQKRSY. Glu112 is a binding site for thiamine diphosphate. Residues Ile165, Ala213, Ile214, Asp216, and Asn218 each coordinate K(+).

As to quaternary structure, eukaryotic pyruvate dehydrogenase (PDH) complexes are organized as a core consisting of the oligomeric dihydrolipoamide acetyl-transferase (E2), around which are arranged multiple copies of pyruvate dehydrogenase (E1), dihydrolipoamide dehydrogenase (E3) and protein X (E3BP) bound by non-covalent bonds. The Chaetomium thermophilum PDH complex contains 60 E2 units, 12 E3BP units, about 20 E1 units, and 12 or more E3 units. The units are organized in 1 E2 60-mer, 4 E3BP trimers, about 20 E1 tetramers, and a maximum of 12 E3 dimers. Pyruvate dehydrogenase (E1) is active as a tetramer of 2 alpha and 2 beta subunits. The E3BP trimers are bound inside the icosahedral core with tetrahedral symmetry. Thiamine diphosphate serves as cofactor.

Its subcellular location is the mitochondrion. The catalysed reaction is N(6)-[(R)-lipoyl]-L-lysyl-[protein] + pyruvate + H(+) = N(6)-[(R)-S(8)-acetyldihydrolipoyl]-L-lysyl-[protein] + CO2. In terms of biological role, the 10-megadalton pyruvate dehydrogenase complex contains multiple copies of three enzymatic components: pyruvate dehydrogenase (E1), dihydrolipoamide acetyltransferase (E2) and lipoamide dehydrogenase (E3) and catalyzes the overall oxidative decarboxylation of pyruvate to form acetyl-CoA and CO(2). Within the complex, pyruvate and thiamine pyrophosphate (TPP or vitamin B1) are bound by pyruvate dehydrogenase E1 subunits alpha and beta and pyruvate is decarboxylated leading to the 2-carbon hydrohyethyl bound to TPP. The E2 component contains covalently-bound lipoyl cofactors and transfers the hydroxyethyl group from TPP to an oxidized form of covalently bound lipoamide, and the resulting acetyl group is then transferred to free coenzyme A to form acetyl-CoA and reduced dihydrolipoamide-E2. Finally, the flavoprotein dihydrolipoamide dehydrogenase (E3) re-oxidizes the lipoyl group of dihydrolipoamide-E2 to form lipoamide-E2 and NADH. A fourth subunit, E3BP, is responsible for tethering E3 in proximity to the core, forming the entire metabolon. This Chaetomium thermophilum (strain DSM 1495 / CBS 144.50 / IMI 039719) (Thermochaetoides thermophila) protein is Pyruvate dehydrogenase E1 component subunit beta, mitochondrial.